The following is a 463-amino-acid chain: ATP synthase subunit beta (463 aa).

152-159 (GGAGVGKT) contacts ATP.

The protein belongs to the ATPase alpha/beta chains family. In terms of assembly, F-type ATPases have 2 components, CF(1) - the catalytic core - and CF(0) - the membrane proton channel. CF(1) has five subunits: alpha(3), beta(3), gamma(1), delta(1), epsilon(1). CF(0) has three main subunits: a(1), b(2) and c(9-12). The alpha and beta chains form an alternating ring which encloses part of the gamma chain. CF(1) is attached to CF(0) by a central stalk formed by the gamma and epsilon chains, while a peripheral stalk is formed by the delta and b chains.

It is found in the cell inner membrane. It catalyses the reaction ATP + H2O + 4 H(+)(in) = ADP + phosphate + 5 H(+)(out). Functionally, produces ATP from ADP in the presence of a proton gradient across the membrane. The catalytic sites are hosted primarily by the beta subunits. The protein is ATP synthase subunit beta of Shewanella sp. (strain MR-7).